A 325-amino-acid chain; its full sequence is Solute-binding protein RD1_1052 (325 aa).

Positions 1-26 (MRLFTKIKGLAAVTCVAALASSAAFA) are cleaved as a signal peptide. D-mannonate is bound by residues Glu-75, 93–95 (GES), 148–151 (RGPR), Arg-171, and Asn-211. Residues Glu-75, 93 to 95 (GES), 148 to 151 (RGPR), Arg-171, and Asn-211 each bind L-galactonate.

It belongs to the bacterial solute-binding protein 7 family. In terms of assembly, the complex is comprised of an extracytoplasmic solute-binding protein and a heteromeric permease formed by two transmembrane proteins.

It is found in the periplasm. Solute-binding protein that binds L-galactonate and D-mannonate (in vitro). Probably part of a tripartite ATP-independent periplasmic (TRAP) transport system that mediates solute transport into the cytoplasm. The sequence is that of Solute-binding protein RD1_1052 from Roseobacter denitrificans (strain ATCC 33942 / OCh 114) (Erythrobacter sp. (strain OCh 114)).